The sequence spans 245 residues: MSQVNMRDMLKAGVHFGHQTRYWNPKMGKYIFGARNKIHIINLEKTLPMFNDALSFVERLAQGKNKIMFVGTKRSAGKIVAEQAARCGSPYVDHRWLGGMLTNYKTIRASIKRLRDLETQAEDGTFAKLTKKEALMRSRDLEKLDRSLGGIKDMGGLPDALFVIDVDHERIAITEANKLGIPVIGVVDTNSSPEGVDYIIPGNDDAIRAIELYMTSMADAVIRGRNNVAGGTEVYAEEAAAPAAE.

The protein belongs to the universal ribosomal protein uS2 family.

The protein is Small ribosomal subunit protein uS2 of Pseudomonas putida (strain W619).